The sequence spans 234 residues: Probable chemoreceptor glutamine deamidase CheD 1 (234 aa).

This sequence belongs to the CheD family.

It catalyses the reaction L-glutaminyl-[protein] + H2O = L-glutamyl-[protein] + NH4(+). Its function is as follows. Probably deamidates glutamine residues to glutamate on methyl-accepting chemotaxis receptors (MCPs), playing an important role in chemotaxis. The polypeptide is Probable chemoreceptor glutamine deamidase CheD 1 (Albidiferax ferrireducens (strain ATCC BAA-621 / DSM 15236 / T118) (Rhodoferax ferrireducens)).